Reading from the N-terminus, the 244-residue chain is Krueppel-like factor 9 (244 aa).

2 disordered regions span residues 24-51 (VPEHGGAPDAERLRLPEREVTKEHGDPG) and 80-142 (SVCS…SEKR). Positions 32–51 (DAERLRLPEREVTKEHGDPG) are enriched in basic and acidic residues. Residue Ser122 is modified to Phosphoserine. C2H2-type zinc fingers lie at residues 143-167 (HKCPYSGCGKVYGKSSHLKAHYRVH), 173-197 (FPCTWPDCLKKFSRSDELTRHYRTH), and 203-225 (FRCPLCEKRFMRSDHLTKHARRH).

It belongs to the Sp1 C2H2-type zinc-finger protein family. Interacts with ZZEF1.

Its subcellular location is the nucleus. In terms of biological role, transcription factor that binds to GC box promoter elements. Selectively activates mRNA synthesis from genes containing tandem repeats of GC boxes but represses genes with a single GC box. Acts as an epidermal circadian transcription factor regulating keratinocyte proliferation. This Sus scrofa (Pig) protein is Krueppel-like factor 9 (KLF9).